Reading from the N-terminus, the 245-residue chain is Carboxymethylenebutenolidase homolog (245 aa).

Ala2 is subject to N-acetylalanine. Catalysis depends on residues Cys132, Asp179, and His212. Ser223 bears the Phosphoserine mark.

This sequence belongs to the dienelactone hydrolase family.

The protein localises to the cytoplasm. It localises to the cytosol. Its function is as follows. Cysteine hydrolase. This is Carboxymethylenebutenolidase homolog (Cmbl) from Mus musculus (Mouse).